Here is a 380-residue protein sequence, read N- to C-terminus: Dynactin subunit 2 (380 aa).

The segment at 1–32 (MADPKFQNLPGIAYDQPDVYETPDDPELDTSD) is disordered. The segment covering 21–32 (ETPDDPELDTSD) has biased composition (acidic residues). Residues S49, S58, and S86 each carry the phosphoserine modification. Coiled coils occupy residues 100–135 (VQKC…QSYD) and 353–377 (ETFA…AAIS).

The protein belongs to the dynactin subunit 2 family. Subunit of dynactin, a multiprotein complex associated with dynein.

The protein resides in the cytoplasm. It localises to the cytoskeleton. It is found in the membrane. In terms of biological role, modulates cytoplasmic dynein binding to an organelle, and plays a role in prometaphase chromosome alignment and spindle organization during mitosis. May play a role in synapse formation during brain development. This is Dynactin subunit 2 from Drosophila melanogaster (Fruit fly).